The primary structure comprises 625 residues: DNA mismatch repair protein MutL (625 aa).

Belongs to the DNA mismatch repair MutL/HexB family.

In terms of biological role, this protein is involved in the repair of mismatches in DNA. It is required for dam-dependent methyl-directed DNA mismatch repair. May act as a 'molecular matchmaker', a protein that promotes the formation of a stable complex between two or more DNA-binding proteins in an ATP-dependent manner without itself being part of a final effector complex. This Xanthomonas axonopodis pv. citri (strain 306) protein is DNA mismatch repair protein MutL.